Reading from the N-terminus, the 417-residue chain is UPF0761 membrane protein Daci_4966 (417 aa).

Transmembrane regions (helical) follow at residues 49–69 (VLAL…FPIF), 106–126 (QLGM…ILTI), 146–166 (VLIY…SLVL), 187–207 (FIFD…LYHY), 235–255 (ALGL…TFAT), and 256–276 (LPIL…GAVV).

The protein belongs to the UPF0761 family.

Its subcellular location is the cell inner membrane. The chain is UPF0761 membrane protein Daci_4966 from Delftia acidovorans (strain DSM 14801 / SPH-1).